The chain runs to 179 residues: Fimbrial subunit ElfA (179 aa).

The first 21 residues, 1–21, serve as a signal peptide directing secretion; that stretch reads MKKSVLTAFITVVCATSSVMA.

This sequence belongs to the fimbrial protein family.

The protein localises to the fimbrium. Functionally, part of the elfADCG-ycbUVF fimbrial operon, which promotes adhesion of bacteria to different abiotic surfaces. ElfA is the major fimbrial subunit produced by this operon. In Escherichia coli (strain K12), this protein is Fimbrial subunit ElfA (elfA).